The primary structure comprises 471 residues: Phosphatidylinositol 4-kinase type 2-alpha (471 aa).

2 disordered regions span residues 1–25 (MDET…QCSP) and 48–101 (PGSA…PDDP). Residues 90 to 101 (AERERNKFPDDP) show a composition bias toward basic and acidic residues. The 329-residue stretch at 117-445 (DILPERISQG…VQTPPVIVET (329 aa)) folds into the PI3K/PI4K catalytic domain. Positions 123-129 (ISQGSSG) are G-loop. Residues 124–130 (SQGSSGS) and K145 contribute to the ATP site. The interval 150–152 (EPY) is important for substrate binding. Residues 158–171 (KWTKWLQKLCCPCC) are important for interaction with membranes. Residues C167, C168, C170, and C171 are each lipidated (S-palmitoyl cysteine). An ATP-binding site is contributed by 254-257 (QLFV). An important for interaction with membranes region spans residues 261-269 (KDADYWLRR). The segment at 298 to 306 (RNTDRGNDN) is catalytic loop. Residues 336–356 (AIDNGLAFPLKHPDSWRAYPF) form an activation loop region. D338 is an ATP binding site. Positions 351–360 (WRAYPFYWAW) are important for interaction with membranes.

This sequence belongs to the PI3/PI4-kinase family. Type II PI4K subfamily.

The protein resides in the golgi apparatus. It is found in the trans-Golgi network membrane. The protein localises to the membrane raft. It localises to the endosome. Its subcellular location is the endosome membrane. The protein resides in the cytoplasmic vesicle. It is found in the cell projection. The protein localises to the dendrite. It localises to the presynaptic cell membrane. Its subcellular location is the synapse. The protein resides in the synaptosome. It is found in the mitochondrion. The protein localises to the membrane. It localises to the cell membrane. Its subcellular location is the perikaryon. The protein resides in the neuron projection. The enzyme catalyses a 1,2-diacyl-sn-glycero-3-phospho-(1D-myo-inositol) + ATP = a 1,2-diacyl-sn-glycero-3-phospho-(1D-myo-inositol 4-phosphate) + ADP + H(+). Functionally, membrane-bound phosphatidylinositol-4 kinase (PI4-kinase) that catalyzes the phosphorylation of phosphatidylinositol (PI) to phosphatidylinositol 4-phosphate (PI4P), a lipid that plays important roles in endocytosis, Golgi function, protein sorting and membrane trafficking. Besides, phosphorylation of phosphatidylinositol (PI) to phosphatidylinositol 4-phosphate (PI4P) is the first committed step in the generation of phosphatidylinositol 4,5-bisphosphate (PIP2), a precursor of the second messenger inositol 1,4,5-trisphosphate (InsP3). The sequence is that of Phosphatidylinositol 4-kinase type 2-alpha (pi4k2a) from Xenopus tropicalis (Western clawed frog).